A 161-amino-acid polypeptide reads, in one-letter code: NADH-quinone oxidoreductase subunit C (161 aa).

The protein belongs to the complex I 30 kDa subunit family. In terms of assembly, NDH-1 is composed of 14 different subunits. Subunits NuoB, C, D, E, F, and G constitute the peripheral sector of the complex.

Its subcellular location is the cell inner membrane. The catalysed reaction is a quinone + NADH + 5 H(+)(in) = a quinol + NAD(+) + 4 H(+)(out). Functionally, NDH-1 shuttles electrons from NADH, via FMN and iron-sulfur (Fe-S) centers, to quinones in the respiratory chain. The immediate electron acceptor for the enzyme in this species is believed to be ubiquinone. Couples the redox reaction to proton translocation (for every two electrons transferred, four hydrogen ions are translocated across the cytoplasmic membrane), and thus conserves the redox energy in a proton gradient. The protein is NADH-quinone oxidoreductase subunit C of Citrifermentans bemidjiense (strain ATCC BAA-1014 / DSM 16622 / JCM 12645 / Bem) (Geobacter bemidjiensis).